The primary structure comprises 418 residues: Tyrosine--tRNA ligase (418 aa).

Y35 contributes to the L-tyrosine binding site. Positions 40 to 49 match the 'HIGH' region motif; it reads PTAKSLHIGH. The L-tyrosine site is built by Y168 and Q172. The 'KMSKS' region signature appears at 228–232; sequence KYGKT. Residue K231 coordinates ATP. The S4 RNA-binding domain maps to 352-410; the sequence is PTVVGAMVAAGVVDTKSGGRRAVAEGGAYLNNVKVADPDQRLTDDDFLCGRVALVRRGK.

It belongs to the class-I aminoacyl-tRNA synthetase family. TyrS type 1 subfamily. Homodimer.

The protein resides in the cytoplasm. It carries out the reaction tRNA(Tyr) + L-tyrosine + ATP = L-tyrosyl-tRNA(Tyr) + AMP + diphosphate + H(+). Functionally, catalyzes the attachment of tyrosine to tRNA(Tyr) in a two-step reaction: tyrosine is first activated by ATP to form Tyr-AMP and then transferred to the acceptor end of tRNA(Tyr). The sequence is that of Tyrosine--tRNA ligase from Cutibacterium acnes (strain DSM 16379 / KPA171202) (Propionibacterium acnes).